Here is a 585-residue protein sequence, read N- to C-terminus: A-type ATP synthase subunit A (585 aa).

ATP is bound at residue G231–T238.

Belongs to the ATPase alpha/beta chains family. As to quaternary structure, has multiple subunits with at least A(3), B(3), C, D, E, F, H, I and proteolipid K(x).

It localises to the cell membrane. The enzyme catalyses ATP + H2O + 4 H(+)(in) = ADP + phosphate + 5 H(+)(out). Its function is as follows. Component of the A-type ATP synthase that produces ATP from ADP in the presence of a proton gradient across the membrane. The A chain is the catalytic subunit. The protein is A-type ATP synthase subunit A of Thermococcus gammatolerans (strain DSM 15229 / JCM 11827 / EJ3).